Reading from the N-terminus, the 1716-residue chain is Histone-lysine N-methyltransferase SETD1A (1716 aa).

The interval 60–89 (LQDPRCHVRSKARDFSLPVPKFKLDEFYIG) is interaction with WDR82. In terms of domain architecture, RRM spans 84–172 (DEFYIGQIPL…NIIHAQLDIK (89 aa)). Disordered regions lie at residues 194-367 (PTGG…SSYP), 380-499 (TSYP…AQHS), 516-670 (FSFL…PPPH), 849-869 (AKPFQNAAKQQAKEEDKEKMK), 911-1206 (KRKE…SRKV), 1230-1259 (EEVARGGRNRAGGRVRSTEEEEATESGTEV), and 1275-1297 (GLATLPTGDDSEATETSDEAERP). Low complexity predominate over residues 222–231 (SDTAAYPAGT). Over residues 243–277 (CSQDTNFSSSRQDTPSSFGQFTPQSSQGTPYTSRG) the composition is skewed to polar residues. 2 stretches are compositionally biased toward low complexity: residues 278 to 295 (STPYSQDSAYSSSTTSTS) and 315 to 357 (STSS…SSAS). Pro residues predominate over residues 430-440 (SEAPPPEPPEP). A compositionally biased stretch (gly residues) spans 441-461 (GGGGGGSGGGGGGGGGGGGGA). Phosphoserine is present on Ser-477. Residues 477-487 (SPARSGSPAPE) are compositionally biased toward low complexity. The span at 488–499 (TTNESVPFAQHS) shows a compositional bias: polar residues. A phosphoserine mark is found at Ser-521 and Ser-578. Positions 581-591 (ANGQNQASPCS) are enriched in polar residues. Composition is skewed to pro residues over residues 606 to 631 (SPPPAPTPPQQPPPPPPPPPPPPPPY) and 638 to 670 (GYPPHQPAYLLPPRPDGPPPPEYPPPPPPPPPH). The span at 859 to 869 (QAKEEDKEKMK) shows a compositional bias: basic and acidic residues. The residue at position 930 (Ser-930) is a Phosphoserine. 2 stretches are compositionally biased toward acidic residues: residues 991–1009 (KDEDDDDEDEEDEEQEEAV) and 1018–1027 (ASDGEDEDSD). Over residues 1028 to 1071 (SSSQCSLYADSDGENGSTSDSESGSSSSSSSSSSSSSSSSSSES) the composition is skewed to low complexity. Ser-1110 bears the Phosphoserine mark. Residues 1130–1150 (EEPPPSVPQPPAEPPAGPPDA) show a composition bias toward pro residues. A compositionally biased stretch (acidic residues) spans 1283–1292 (DDSEATETSD). The HCFC1-binding motif (HBM) signature appears at 1307 to 1311 (EHNYA). 2 disordered regions span residues 1355 to 1427 (EEPK…FEPR) and 1480 to 1508 (TNLSTPKRKRRPQDGPREHQTGSARSEGY). Residues 1369–1383 (EGEEEEEDEEEESES) show a composition bias toward acidic residues. Residues 1399–1412 (RRRSLRSHTRRRRP) show a composition bias toward basic residues. A compositionally biased stretch (pro residues) spans 1413-1424 (PLPPPPPPPPSF). The tract at residues 1424–1459 (FEPRSEFEQMTILYDIWNSGLDLEDMSYLRLTYERL) is interaction with CFP1. Residues 1459 to 1546 (LLQQTSGADW…GTNRVLSERR (88 aa)) are interaction with ASH2L, RBBP5 and WDR5. Positions 1501-1506 (GSARSE) match the WDR5 interaction motif (WIN) motif. The RxxxRR motif signature appears at 1546-1551 (RSEQRR). The 118-residue stretch at 1577-1694 (KKLRFGRSRI…VDEEITYDYK (118 aa)) folds into the SET domain. Position 1693 (Tyr-1693) interacts with S-adenosyl-L-methionine. Residues 1700 to 1716 (NKIPCLCGTESCRGSLN) form the Post-SET domain.

The protein belongs to the class V-like SAM-binding methyltransferase superfamily. Component of the SET1A/COMPASS complex composed of the catalytic subunit SETD1A, WDR5, WDR82, RBBP5, ASH2L/ASH2, CXXC1/CFP1, HCFC1 and DPY30 homotrimer. Forms a core complex with the evolutionary conserved subcomplex WRAD composed of WDR5, RBBP5, ASH2L/ASH2 and DPY30 subunits; WRAD differentially stimulates the methyltransferase activity. Interacts with BOD1L1 (via COMPASS-Shg1 domain) at replication forks. Interacts with HCFC1. Interacts with ASH2/ASH2L. Interacts with CXXC1/CFP1. Interacts with RBBP5. Interacts (via N-terminal region) with WDR82; the interaction is direct. Interacts (via the RRM domain) with hyperphosphorylated C-terminal domain (CTD) of RNA polymerase II large subunit (POLR2A) only in the presence of WDR82. Binds specifically to CTD heptad repeats phosphorylated on 'Ser-5' of each heptad. Interacts with ZNF335. Interacts with SUPT6H. Interacts with NAP1L1. Interacts (via WIN motif) with WDR5.

It is found in the nucleus. The protein localises to the nucleus speckle. It localises to the chromosome. The protein resides in the cytoplasm. It catalyses the reaction L-lysyl(4)-[histone H3] + S-adenosyl-L-methionine = N(6)-methyl-L-lysyl(4)-[histone H3] + S-adenosyl-L-homocysteine + H(+). The enzyme catalyses N(6)-methyl-L-lysyl(4)-[histone H3] + S-adenosyl-L-methionine = N(6),N(6)-dimethyl-L-lysyl(4)-[histone H3] + S-adenosyl-L-homocysteine + H(+). The catalysed reaction is N(6),N(6)-dimethyl-L-lysyl(4)-[histone H3] + S-adenosyl-L-methionine = N(6),N(6),N(6)-trimethyl-L-lysyl(4)-[histone H3] + S-adenosyl-L-homocysteine + H(+). In terms of biological role, histone methyltransferase that catalyzes methyl group transfer from S-adenosyl-L-methionine to the epsilon-amino group of 'Lys-4' of histone H3 (H3K4) via a non-processive mechanism. Part of chromatin remodeling machinery, forms H3K4me1, H3K4me2 and H3K4me3 methylation marks at active chromatin sites where transcription and DNA repair take place. Responsible for H3K4me3 enriched promoters and transcriptional programming of inner mass stem cells and neuron progenitors during embryogenesis. Required for H3K4me1 mark at stalled replication forks. Mediates FANCD2-dependent nucleosome remodeling and RAD51 nucleofilaments stabilization at reversed forks, protecting them from nucleolytic degradation. Does not methylate 'Lys-4' of histone H3 if the neighboring 'Lys-9' residue is already methylated. Has RNA binding activity towards transcripts involved in RNA processing and the DNA damage response. This is Histone-lysine N-methyltransferase SETD1A (Setd1a) from Mus musculus (Mouse).